An 880-amino-acid polypeptide reads, in one-letter code: MKELTSSQVRQMYLDFFKSKGHSVEPSASLVPVNDPTLLWINSGVATLKKYFDGSVVPENPRITNAQKSIRTNDIENVGKTARHHTMFEMLGNFSIGDYFKNEAIHWAWEFLTGAEWLAFDPEKLYVTVYPKDTEAKRIWRDEVGLSEDHIIDVEDNFWDIGAGPSGPDTEIFYDRGEEFLDIPEDDPENYPGGENERYLEIWNLVFSEFNHTPEDTYEPLPHKNIDTGMGLERVVSIIQDAPTNFETDLFMPIIHAVEALGTNVKYGDAPQTDVSFKVIADHIRALSFAIGDGALPSNEGRGYVLRRLLRRAVMHGKKLGINEAFLYKLVPVVGEIMVSYYPEVLQQKDFIEKVVRTEEERFHETINEGLSMLNEVIKEVKDAKGDTLDGKIIFKLYDTFGFPVELTEEVAEDEGLKVDHAGFETEMEAQRERARSARSKETSMGVQSALLTDIKVESKFVGYTELTHDSELFVIIQGDALVNEASAGTAELIFAETPFYAEMGGQIADRGYVKNTAGEVVANVVDVKKAPNGQFLHKVEVLAPLAEGQIYQLQVDERMRTRILKNHTATHLLHRALKDVLGEHANQAGSLVAPGHLRFDFTHFGQVTSEELARMEAIVNEKIWEAIPVVTIETDIDTAKNMGAMALFGEKYGKEVRVVNIGDYSIELCGGTHVANTEDIGIFKIVSESGIGAGVRRIEAVTSKEAYQLLQEEERQLKEIATLVKSPQLKEVVTKTEQLQQQLRDLQKENEQLAGKLANQQAGDIFKDVKDINGVRYIAAQVNVKDMNQLRQLADQWKQKELSDVLVLATAQDEKVSLLAAMTKDMNGKGLKAGDLIKAIAPKVGGGGGGRPDMAQAGGKNPAGIADALAEVENWLANA.

His-568, His-572, Cys-670, and His-674 together coordinate Zn(2+).

This sequence belongs to the class-II aminoacyl-tRNA synthetase family. Zn(2+) is required as a cofactor.

It localises to the cytoplasm. It catalyses the reaction tRNA(Ala) + L-alanine + ATP = L-alanyl-tRNA(Ala) + AMP + diphosphate. Catalyzes the attachment of alanine to tRNA(Ala) in a two-step reaction: alanine is first activated by ATP to form Ala-AMP and then transferred to the acceptor end of tRNA(Ala). Also edits incorrectly charged Ser-tRNA(Ala) and Gly-tRNA(Ala) via its editing domain. The protein is Alanine--tRNA ligase of Enterococcus faecalis (strain ATCC 700802 / V583).